A 513-amino-acid chain; its full sequence is Maturase K (513 aa).

It belongs to the intron maturase 2 family. MatK subfamily.

It is found in the plastid. The protein resides in the chloroplast. Its function is as follows. Usually encoded in the trnK tRNA gene intron. Probably assists in splicing its own and other chloroplast group II introns. This chain is Maturase K, found in Eleusine indica (Goosegrass).